The primary structure comprises 581 residues: MADEAKAKGNAAFSAGRFEEAAGHFSDAIALAPANHVLYSNRSAALASIHRYSDALADAEKTVELKPDWAKGYSRLGAAHLGLGDAASAAAAYEKGLALDPSNEGLKAGLADAKKAAAAPPRRAPSGGADAIGQMFQGPELWTKIASDPATRAYLDQPDFMQMLREVQRNPSSLNTYLSDPRMMQVLSLMLNIKIQTPQDSDFSQSSSPSQPPPQQQKQQPETKAREMEPEPQPEPMEVSDEEKERKERKAAALKEKEAGNASYKKKDFETAIQHYTKALELDDEDISYLTNRAAVYIEMGKYDECIEDCDKAVERGRELRADFKMVARALTRKGTALAKLAKNSKDYDIAIETFQKALTEHRNPDTLKRLNEAEKAKKDLEQQEYYDPKLADEEREKGNEMFKQQKYPEAIKHYNEAIRRNPKDARVYSNRAACYTKLGAMPEGLKDAEKCIELDPTFTKGYTRKGAVQFFMKEYEKAMETYQAGLKYDPNNQELLDGIRRCVEQINKANRGDISQEDLQEKQSKAMQDPEIQNILTDPIMRQVLMDFQENPRAAQDHLKDPGVAQKIQKLINAGIVQTR.

3 TPR repeats span residues 2–35, 37–69, and 70–103; these read ADEA…APAN, VLYS…KPDW, and AKGY…DPSN. Residues 148–187 form the STI1 1 domain; that stretch reads DPATRAYLDQPDFMQMLREVQRNPSSLNTYLSDPRMMQVL. Residues 199-209 show a composition bias toward low complexity; that stretch reads QDSDFSQSSSP. A disordered region spans residues 199–261; that stretch reads QDSDFSQSSS…AALKEKEAGN (63 aa). Positions 243–261 are enriched in basic and acidic residues; that stretch reads EKERKERKAAALKEKEAGN. Residues 250–267 carry the Bipartite nuclear localization signal motif; it reads KAAALKEKEAGNASYKKK. 6 TPR repeats span residues 253–286, 288–320, 332–365, 392–425, 427–459, and 460–493; these read ALKE…DDED, SYLT…GREL, TRKG…HRNP, ADEE…NPKD, RVYS…DPTF, and TKGY…DPNN. Positions 530-569 constitute an STI1 2 domain; sequence DPEIQNILTDPIMRQVLMDFQENPRAAQDHLKDPGVAQKI.

Co-chaperone that forms a complex with HSP70 and HSP90 and preproteins (e.g. chloroplast preproteins). Post-translationally, phosphorylated. Acetylated.

It is found in the cytoplasm. It localises to the nucleus. Functionally, mediates the association of the molecular chaperones HSP70 and HSP90. Mediates nuclear encoded chloroplast preproteins binding to HSP90 prior to chloroplastic sorting. This chain is Hsp70-Hsp90 organizing protein (HOP), found in Triticum aestivum (Wheat).